Consider the following 302-residue polypeptide: 4-hydroxy-tetrahydrodipicolinate synthase (302 aa).

A pyruvate-binding site is contributed by T44. Residue Y132 is the Proton donor/acceptor of the active site. K160 serves as the catalytic Schiff-base intermediate with substrate. V202 contributes to the pyruvate binding site.

It belongs to the DapA family. Homotetramer; dimer of dimers.

The protein localises to the cytoplasm. It carries out the reaction L-aspartate 4-semialdehyde + pyruvate = (2S,4S)-4-hydroxy-2,3,4,5-tetrahydrodipicolinate + H2O + H(+). It functions in the pathway amino-acid biosynthesis; L-lysine biosynthesis via DAP pathway; (S)-tetrahydrodipicolinate from L-aspartate: step 3/4. Its function is as follows. Catalyzes the condensation of (S)-aspartate-beta-semialdehyde [(S)-ASA] and pyruvate to 4-hydroxy-tetrahydrodipicolinate (HTPA). This Thermomicrobium roseum (strain ATCC 27502 / DSM 5159 / P-2) protein is 4-hydroxy-tetrahydrodipicolinate synthase.